We begin with the raw amino-acid sequence, 103 residues long: Large ribosomal subunit protein eL14 (103 aa).

This sequence belongs to the eukaryotic ribosomal protein eL14 family.

In Pyrobaculum islandicum (strain DSM 4184 / JCM 9189 / GEO3), this protein is Large ribosomal subunit protein eL14.